We begin with the raw amino-acid sequence, 315 residues long: Protoheme IX farnesyltransferase (315 aa).

A run of 9 helical transmembrane segments spans residues 34–54 (VISL…GPIN), 55–75 (PLIA…AGAI), 105–125 (ALGF…LAAN), 127–147 (LAAF…TMWL), 155–175 (IVIG…ATTG), 177–197 (LGVL…PHFW), 226–246 (WQIL…SFLH), 251–271 (LYTG…VGVL), and 294–314 (YSLA…FLIM).

This sequence belongs to the UbiA prenyltransferase family. Protoheme IX farnesyltransferase subfamily.

It is found in the cell inner membrane. It catalyses the reaction heme b + (2E,6E)-farnesyl diphosphate + H2O = Fe(II)-heme o + diphosphate. It functions in the pathway porphyrin-containing compound metabolism; heme O biosynthesis; heme O from protoheme: step 1/1. Converts heme B (protoheme IX) to heme O by substitution of the vinyl group on carbon 2 of heme B porphyrin ring with a hydroxyethyl farnesyl side group. The sequence is that of Protoheme IX farnesyltransferase from Gluconacetobacter diazotrophicus (strain ATCC 49037 / DSM 5601 / CCUG 37298 / CIP 103539 / LMG 7603 / PAl5).